Here is a 213-residue protein sequence, read N- to C-terminus: Peptidyl-tRNA hydrolase (213 aa).

Tyrosine 26 contacts tRNA. Catalysis depends on histidine 31, which acts as the Proton acceptor. Positions 78, 80, and 126 each coordinate tRNA.

The protein belongs to the PTH family. As to quaternary structure, monomer.

It localises to the cytoplasm. The enzyme catalyses an N-acyl-L-alpha-aminoacyl-tRNA + H2O = an N-acyl-L-amino acid + a tRNA + H(+). Functionally, hydrolyzes ribosome-free peptidyl-tRNAs (with 1 or more amino acids incorporated), which drop off the ribosome during protein synthesis, or as a result of ribosome stalling. Catalyzes the release of premature peptidyl moieties from peptidyl-tRNA molecules trapped in stalled 50S ribosomal subunits, and thus maintains levels of free tRNAs and 50S ribosomes. This is Peptidyl-tRNA hydrolase from Nostoc punctiforme (strain ATCC 29133 / PCC 73102).